The sequence spans 373 residues: Queuine tRNA-ribosyltransferase (373 aa).

The active-site Proton acceptor is Asp90. Residues 90–94, Asp144, Gln193, and Gly220 each bind substrate; that span reads DSGGF. The interval 251-257 is RNA binding; sequence GVGTPED. The active-site Nucleophile is the Asp270. Positions 275–279 are RNA binding; important for wobble base 34 recognition; the sequence is TRNAR. Zn(2+) is bound by residues Cys308, Cys310, Cys313, and His339.

Belongs to the queuine tRNA-ribosyltransferase family. As to quaternary structure, homodimer. Within each dimer, one monomer is responsible for RNA recognition and catalysis, while the other monomer binds to the replacement base PreQ1. It depends on Zn(2+) as a cofactor.

It catalyses the reaction 7-aminomethyl-7-carbaguanine + guanosine(34) in tRNA = 7-aminomethyl-7-carbaguanosine(34) in tRNA + guanine. The protein operates within tRNA modification; tRNA-queuosine biosynthesis. Functionally, catalyzes the base-exchange of a guanine (G) residue with the queuine precursor 7-aminomethyl-7-deazaguanine (PreQ1) at position 34 (anticodon wobble position) in tRNAs with GU(N) anticodons (tRNA-Asp, -Asn, -His and -Tyr). Catalysis occurs through a double-displacement mechanism. The nucleophile active site attacks the C1' of nucleotide 34 to detach the guanine base from the RNA, forming a covalent enzyme-RNA intermediate. The proton acceptor active site deprotonates the incoming PreQ1, allowing a nucleophilic attack on the C1' of the ribose to form the product. After dissociation, two additional enzymatic reactions on the tRNA convert PreQ1 to queuine (Q), resulting in the hypermodified nucleoside queuosine (7-(((4,5-cis-dihydroxy-2-cyclopenten-1-yl)amino)methyl)-7-deazaguanosine). The polypeptide is Queuine tRNA-ribosyltransferase (Campylobacter jejuni subsp. jejuni serotype O:2 (strain ATCC 700819 / NCTC 11168)).